A 200-amino-acid polypeptide reads, in one-letter code: dTTP/UTP pyrophosphatase (200 aa).

The active-site Proton acceptor is the Asp81.

Belongs to the Maf family. YhdE subfamily. A divalent metal cation serves as cofactor.

The protein localises to the cytoplasm. The enzyme catalyses dTTP + H2O = dTMP + diphosphate + H(+). It catalyses the reaction UTP + H2O = UMP + diphosphate + H(+). In terms of biological role, nucleoside triphosphate pyrophosphatase that hydrolyzes dTTP and UTP. May have a dual role in cell division arrest and in preventing the incorporation of modified nucleotides into cellular nucleic acids. The polypeptide is dTTP/UTP pyrophosphatase (Albidiferax ferrireducens (strain ATCC BAA-621 / DSM 15236 / T118) (Rhodoferax ferrireducens)).